We begin with the raw amino-acid sequence, 180 residues long: Segregation and condensation protein B (180 aa).

The protein belongs to the ScpB family. In terms of assembly, homodimer. Homodimerization may be required to stabilize the binding of ScpA to the Smc head domains. Component of a cohesin-like complex composed of ScpA, ScpB and the Smc homodimer, in which ScpA and ScpB bind to the head domain of Smc. The presence of the three proteins is required for the association of the complex with DNA.

It localises to the cytoplasm. In terms of biological role, participates in chromosomal partition during cell division. May act via the formation of a condensin-like complex containing Smc and ScpA that pull DNA away from mid-cell into both cell halves. The chain is Segregation and condensation protein B from Staphylococcus aureus (strain Mu3 / ATCC 700698).